A 93-amino-acid polypeptide reads, in one-letter code: Small ribosomal subunit protein uS19 (93 aa).

A disordered region spans residues 73–93 (EFSPTRTFRGHVKDDRKSKRR). The segment covering 83 to 93 (HVKDDRKSKRR) has biased composition (basic and acidic residues).

It belongs to the universal ribosomal protein uS19 family.

Protein S19 forms a complex with S13 that binds strongly to the 16S ribosomal RNA. In Streptomyces coelicolor (strain ATCC BAA-471 / A3(2) / M145), this protein is Small ribosomal subunit protein uS19.